We begin with the raw amino-acid sequence, 251 residues long: Uroporphyrinogen-III C-methyltransferase (251 aa).

Residues Pro-17, 93–95 (GGD), 123–124 (TS), Met-177, and Ala-206 each bind S-adenosyl-L-homocysteine.

It belongs to the precorrin methyltransferase family.

The protein resides in the plastid. It is found in the chloroplast. It catalyses the reaction uroporphyrinogen III + 2 S-adenosyl-L-methionine = precorrin-2 + 2 S-adenosyl-L-homocysteine + H(+). Its pathway is cofactor biosynthesis; adenosylcobalamin biosynthesis; precorrin-2 from uroporphyrinogen III: step 1/1. The protein operates within porphyrin-containing compound metabolism; siroheme biosynthesis; precorrin-2 from uroporphyrinogen III: step 1/1. In terms of biological role, catalyzes the two successive C-2 and C-7 methylation reactions involved in the conversion of uroporphyrinogen III to precorrin-2 via the intermediate formation of precorrin-1. It is a step in the biosynthesis of both cobalamin (vitamin B12) and siroheme. This is Uroporphyrinogen-III C-methyltransferase (cobA) from Cyanidium caldarium (Red alga).